The chain runs to 120 residues: Large ribosomal subunit protein bL19 (120 aa).

Belongs to the bacterial ribosomal protein bL19 family.

Functionally, this protein is located at the 30S-50S ribosomal subunit interface and may play a role in the structure and function of the aminoacyl-tRNA binding site. This is Large ribosomal subunit protein bL19 from Kocuria rhizophila (strain ATCC 9341 / DSM 348 / NBRC 103217 / DC2201).